A 54-amino-acid polypeptide reads, in one-letter code: U-reduvitoxin-Pr7a (54 aa).

An N-terminal signal peptide occupies residues 1 to 23; the sequence is MDFLRILLFVLACIMALFTSAIA. 3 disulfide bridges follow: Cys-26–Cys-41, Cys-33–Cys-46, and Cys-40–Cys-53.

It belongs to the venom Ptu1-like knottin family. As to expression, expressed by the venom gland.

The protein localises to the secreted. In terms of biological role, binds reversibly and blocks P/Q-type voltage-gated calcium channels (Cav). This Platymeris rhadamanthus (Red spot assassin bug) protein is U-reduvitoxin-Pr7a.